Consider the following 813-residue polypeptide: Protein PPP4R3C1 (813 aa).

A disordered region spans residues 730–813; it reads NESESAIEGQ…PPPKRPNLST (84 aa). A compositionally biased stretch (acidic residues) spans 777-788; the sequence is YDTDDENDDDPY.

This sequence belongs to the SMEK family.

This chain is Protein PPP4R3C1, found in Mus musculus (Mouse).